A 428-amino-acid polypeptide reads, in one-letter code: Enolase (428 aa).

Glutamine 163 serves as a coordination point for (2R)-2-phosphoglycerate. The active-site Proton donor is glutamate 205. Aspartate 243, glutamate 286, and aspartate 313 together coordinate Mg(2+). Residues lysine 338, arginine 367, serine 368, and lysine 389 each coordinate (2R)-2-phosphoglycerate. Catalysis depends on lysine 338, which acts as the Proton acceptor.

This sequence belongs to the enolase family. The cofactor is Mg(2+).

It localises to the cytoplasm. It is found in the secreted. The protein resides in the cell surface. It carries out the reaction (2R)-2-phosphoglycerate = phosphoenolpyruvate + H2O. It functions in the pathway carbohydrate degradation; glycolysis; pyruvate from D-glyceraldehyde 3-phosphate: step 4/5. Catalyzes the reversible conversion of 2-phosphoglycerate (2-PG) into phosphoenolpyruvate (PEP). It is essential for the degradation of carbohydrates via glycolysis. This chain is Enolase, found in Polaromonas naphthalenivorans (strain CJ2).